The chain runs to 475 residues: 23S rRNA (uracil(1939)-C(5))-methyltransferase RlmD (475 aa).

One can recognise a TRAM domain in the interval 1–76; that stretch reads MHRGDKPVNI…SRFSKAKVRE (76 aa). Cys-89, Cys-95, Cys-98, and Cys-178 together coordinate [4Fe-4S] cluster. Gln-299, Phe-328, Asn-333, Glu-349, Asp-377, and Asp-398 together coordinate S-adenosyl-L-methionine. Cys-431 serves as the catalytic Nucleophile.

This sequence belongs to the class I-like SAM-binding methyltransferase superfamily. RNA M5U methyltransferase family. RlmD subfamily.

The catalysed reaction is uridine(1939) in 23S rRNA + S-adenosyl-L-methionine = 5-methyluridine(1939) in 23S rRNA + S-adenosyl-L-homocysteine + H(+). Its function is as follows. Catalyzes the formation of 5-methyl-uridine at position 1939 (m5U1939) in 23S rRNA. This Polynucleobacter necessarius subsp. necessarius (strain STIR1) protein is 23S rRNA (uracil(1939)-C(5))-methyltransferase RlmD.